A 62-amino-acid chain; its full sequence is Small EDRK-rich factor 1 (62 aa).

Basic and acidic residues-rich tracts occupy residues 1-30 (MARG…KEDS) and 50-62 (AANE…TREK). Residues 1 to 62 (MARGNQRELA…ERKSMQTREK (62 aa)) are disordered.

Belongs to the SERF family. In terms of assembly, interacts with SNCA; this interaction promotes the aggregation of SNCA.

It is found in the cytoplasm. Its subcellular location is the cytosol. The protein resides in the nucleus. Its function is as follows. Positive regulator of amyloid protein aggregation and proteotoxicity. Induces conformational changes in amyloid proteins, such as APP, HTT, and SNCA, driving them into compact formations preceding the formation of aggregates. This is Small EDRK-rich factor 1 (SERF1) from Bos taurus (Bovine).